Here is a 315-residue protein sequence, read N- to C-terminus: MSKEQTLMTPYLQFDRNQWAALRDSVPMTLTEGEIARLKGINEDLSLEEVAEIYLPLSRLLNFYISSNLRRQAVLEQFLGTNGQRIPYIISIAGSVAVGKSTTARVLQALLSRWPEHRRVELITTDGFLHPNQVLKDRGLMKKKGFPESYDMHRLVKFVSDLKSGVPNVTAPVYSHLIYDVIPDGDKTVAQPDILILEGLNVLQSGMDYPHDPHHVFVSDFVDFSIYVDAPEDLLQTWYINRFLKFREGAFTDPDSYFHNYAKLSKDEAINTAASLWKEINWLNLKQNILPTRERASLIMTKSANHAVEQVRLRK.

94–101 (GSVAVGKS) lines the ATP pocket.

This sequence belongs to the prokaryotic pantothenate kinase family.

Its subcellular location is the cytoplasm. It catalyses the reaction (R)-pantothenate + ATP = (R)-4'-phosphopantothenate + ADP + H(+). Its pathway is cofactor biosynthesis; coenzyme A biosynthesis; CoA from (R)-pantothenate: step 1/5. The sequence is that of Pantothenate kinase from Citrobacter koseri (strain ATCC BAA-895 / CDC 4225-83 / SGSC4696).